The sequence spans 118 residues: Large ribosomal subunit protein bL20 (118 aa).

Belongs to the bacterial ribosomal protein bL20 family.

Functionally, binds directly to 23S ribosomal RNA and is necessary for the in vitro assembly process of the 50S ribosomal subunit. It is not involved in the protein synthesizing functions of that subunit. In Yersinia pseudotuberculosis serotype O:1b (strain IP 31758), this protein is Large ribosomal subunit protein bL20.